The following is a 229-amino-acid chain: Peptide methionine sulfoxide reductase B3, chloroplastic (229 aa).

The transit peptide at 1–71 directs the protein to the chloroplast; that stretch reads MGVQHLLKLR…NHNQWAASRC (71 aa). The MsrB domain maps to 102–223; it reads EEEWEAILSP…NSISLKFIPA (122 aa). Residues cysteine 141, cysteine 144, cysteine 187, and cysteine 190 each contribute to the Zn(2+) site. Cysteine 159 and cysteine 212 are joined by a disulfide. Cysteine 212 (nucleophile) is an active-site residue.

This sequence belongs to the MsrB Met sulfoxide reductase family. The cofactor is Zn(2+).

The protein resides in the plastid. The protein localises to the chloroplast. The catalysed reaction is L-methionyl-[protein] + [thioredoxin]-disulfide + H2O = L-methionyl-(R)-S-oxide-[protein] + [thioredoxin]-dithiol. Functionally, catalyzes the reduction of methionine sulfoxide (MetSO) to methionine in proteins. Plays a protective role against oxidative stress by restoring activity to proteins that have been inactivated by methionine oxidation. MSRB family specifically reduces the MetSO R-enantiomer. The chain is Peptide methionine sulfoxide reductase B3, chloroplastic (MSRB3) from Oryza sativa subsp. japonica (Rice).